Consider the following 80-residue polypeptide: Dolichol-phosphate mannose synthase subunit 2 (80 aa).

Helical transmembrane passes span 10–30 (LLLS…VIIL) and 50–70 (ILVP…FIGM).

Belongs to the DPM2 family. As to quaternary structure, component of the dolichol-phosphate mannose (DPM) synthase complex composed of DPMS1, DPMS2 and DPMS3; in the complex interacts directly with DPMS3. Associates with the GPI-GlcNAc transferase (GPI-GnT) complex.

The protein resides in the endoplasmic reticulum membrane. It functions in the pathway protein modification; protein glycosylation. In terms of biological role, regulates the biosynthesis of dolichol phosphate-mannose. Regulatory subunit of the dolichol-phosphate mannose (DPM) synthase complex; essential for the ER localization and stable expression of DPMS1. The sequence is that of Dolichol-phosphate mannose synthase subunit 2 from Arabidopsis thaliana (Mouse-ear cress).